A 176-amino-acid chain; its full sequence is Oleosin Ara h 14.0101 (176 aa).

An N-acetylalanine; alternate modification is found at alanine 2. The next 2 membrane-spanning stretches (helical) occupy residues 50-80 (IIAV…GLAI) and 95-117 (AVVT…LTGL). A disordered region spans residues 157 to 176 (TKDAGQQIQTKAQDVKRSSS).

Belongs to the oleosin family. As to quaternary structure, homodimer. Forms oligomers. As to expression, expressed in seeds (at protein level). Not expressed in leaves.

Its subcellular location is the lipid droplet. The protein localises to the membrane. Its function is as follows. May have a structural role to stabilize the lipid body during desiccation of the seed by preventing coalescence of the oil. Probably interacts with both lipid and phospholipid moieties of lipid bodies. May also provide recognition signals for specific lipase anchorage in lipolysis during seedling growth. The chain is Oleosin Ara h 14.0101 from Arachis hypogaea (Peanut).